A 1192-amino-acid chain; its full sequence is ATP-dependent helicase/deoxyribonuclease subunit B (1192 aa).

The protein belongs to the helicase family. AddB/RexB type 2 subfamily. As to quaternary structure, heterodimer of AddA and RexB. The cofactor is Mg(2+).

In terms of biological role, the heterodimer acts as both an ATP-dependent DNA helicase and an ATP-dependent, dual-direction single-stranded exonuclease. Recognizes the chi site generating a DNA molecule suitable for the initiation of homologous recombination. This subunit has 5' -&gt; 3' nuclease activity but not helicase activity. In Pediococcus pentosaceus (strain ATCC 25745 / CCUG 21536 / LMG 10740 / 183-1w), this protein is ATP-dependent helicase/deoxyribonuclease subunit B.